The following is a 430-amino-acid chain: 3-phosphoshikimate 1-carboxyvinyltransferase (430 aa).

Residues K23, S24, and R28 each coordinate 3-phosphoshikimate. K23 provides a ligand contact to phosphoenolpyruvate. Residues G95 and R123 each coordinate phosphoenolpyruvate. 4 residues coordinate 3-phosphoshikimate: S169, Q171, D315, and K342. Q171 serves as a coordination point for phosphoenolpyruvate. D315 serves as the catalytic Proton acceptor. 2 residues coordinate phosphoenolpyruvate: R346 and R388.

Belongs to the EPSP synthase family. Monomer.

The protein localises to the cytoplasm. The catalysed reaction is 3-phosphoshikimate + phosphoenolpyruvate = 5-O-(1-carboxyvinyl)-3-phosphoshikimate + phosphate. Its pathway is metabolic intermediate biosynthesis; chorismate biosynthesis; chorismate from D-erythrose 4-phosphate and phosphoenolpyruvate: step 6/7. Its function is as follows. Catalyzes the transfer of the enolpyruvyl moiety of phosphoenolpyruvate (PEP) to the 5-hydroxyl of shikimate-3-phosphate (S3P) to produce enolpyruvyl shikimate-3-phosphate and inorganic phosphate. In Streptococcus pyogenes serotype M3 (strain ATCC BAA-595 / MGAS315), this protein is 3-phosphoshikimate 1-carboxyvinyltransferase.